The following is a 121-amino-acid chain: Small ribosomal subunit protein uS13 (121 aa).

The interval glycine 94–lysine 121 is disordered. Over residues valine 109–lysine 121 the composition is skewed to basic residues.

It belongs to the universal ribosomal protein uS13 family. Part of the 30S ribosomal subunit. Forms a loose heterodimer with protein S19. Forms two bridges to the 50S subunit in the 70S ribosome.

In terms of biological role, located at the top of the head of the 30S subunit, it contacts several helices of the 16S rRNA. In the 70S ribosome it contacts the 23S rRNA (bridge B1a) and protein L5 of the 50S subunit (bridge B1b), connecting the 2 subunits; these bridges are implicated in subunit movement. Contacts the tRNAs in the A and P-sites. The protein is Small ribosomal subunit protein uS13 of Onion yellows phytoplasma (strain OY-M).